Reading from the N-terminus, the 308-residue chain is Oxygen-dependent coproporphyrinogen-III oxidase (308 aa).

Ser94 contacts substrate. Residues His98 and His108 each contribute to the a divalent metal cation site. His108 functions as the Proton donor in the catalytic mechanism. 110 to 112 (NVR) is a binding site for substrate. Residues His147 and His177 each coordinate a divalent metal cation. The segment at 242-277 (YVEFNLVWDRGTLFGLQTGGRTESILMSMPPLVRWE) is important for dimerization. 260–262 (GGR) contacts substrate.

Belongs to the aerobic coproporphyrinogen-III oxidase family. In terms of assembly, homodimer. It depends on a divalent metal cation as a cofactor.

It localises to the cytoplasm. The enzyme catalyses coproporphyrinogen III + O2 + 2 H(+) = protoporphyrinogen IX + 2 CO2 + 2 H2O. It functions in the pathway porphyrin-containing compound metabolism; protoporphyrin-IX biosynthesis; protoporphyrinogen-IX from coproporphyrinogen-III (O2 route): step 1/1. Its function is as follows. Involved in the heme biosynthesis. Catalyzes the aerobic oxidative decarboxylation of propionate groups of rings A and B of coproporphyrinogen-III to yield the vinyl groups in protoporphyrinogen-IX. This Yersinia enterocolitica serotype O:8 / biotype 1B (strain NCTC 13174 / 8081) protein is Oxygen-dependent coproporphyrinogen-III oxidase.